The following is a 423-amino-acid chain: Ornithine cyclodeaminase (423 aa).

10 residues coordinate NAD(+): N241, A242, D320, T352, M353, L354, H355, D373, D396, and V397.

Belongs to the AgrE/ArgZ ornithine cyclodeaminase family. The cofactor is NAD(+).

The catalysed reaction is L-ornithine = L-proline + NH4(+). In terms of biological role, catalyzes the conversion of ornithine to proline, with the release of ammonia. This Methanocaldococcus jannaschii (strain ATCC 43067 / DSM 2661 / JAL-1 / JCM 10045 / NBRC 100440) (Methanococcus jannaschii) protein is Ornithine cyclodeaminase.